The primary structure comprises 419 residues: Phospho-N-acetylmuramoyl-pentapeptide-transferase (419 aa).

Transmembrane regions (helical) follow at residues 22–42 (YVSF…TVIG), 72–92 (TPTM…LLLA), 99–119 (ILLM…DDYI), 135–155 (IIGQ…NPAV), 208–228 (VLFG…FISN), 238–258 (GLAT…AYVS), 278–298 (LTIF…YNAY), 303–323 (FMGD…ALII), 328–348 (LLPI…IQVF), and 396–416 (KITV…IATL).

It belongs to the glycosyltransferase 4 family. MraY subfamily. Mg(2+) serves as cofactor.

Its subcellular location is the cell inner membrane. The catalysed reaction is UDP-N-acetyl-alpha-D-muramoyl-L-alanyl-gamma-D-glutamyl-meso-2,6-diaminopimeloyl-D-alanyl-D-alanine + di-trans,octa-cis-undecaprenyl phosphate = di-trans,octa-cis-undecaprenyl diphospho-N-acetyl-alpha-D-muramoyl-L-alanyl-D-glutamyl-meso-2,6-diaminopimeloyl-D-alanyl-D-alanine + UMP. The protein operates within cell wall biogenesis; peptidoglycan biosynthesis. Catalyzes the initial step of the lipid cycle reactions in the biosynthesis of the cell wall peptidoglycan: transfers peptidoglycan precursor phospho-MurNAc-pentapeptide from UDP-MurNAc-pentapeptide onto the lipid carrier undecaprenyl phosphate, yielding undecaprenyl-pyrophosphoryl-MurNAc-pentapeptide, known as lipid I. The chain is Phospho-N-acetylmuramoyl-pentapeptide-transferase from Porphyromonas gingivalis (strain ATCC 33277 / DSM 20709 / CIP 103683 / JCM 12257 / NCTC 11834 / 2561).